The chain runs to 200 residues: Protein C2-DOMAIN ABA-RELATED 5 (200 aa).

Positions 22-142 (VAGEKHKDRR…LKMHLHDLPS (121 aa)) constitute a C2 domain. Residues Arg57, Asp58, Asp63, Asp109, Tyr110, Asp111, and Asp117 each coordinate Ca(2+).

This sequence belongs to the plant CAR protein family. As to quaternary structure, binds to PYR/PYL/RCAR abscisic acid intracellular receptors in an ABA-independent manner, both at the plasma membrane and in the nucleus.

It is found in the cell membrane. The protein localises to the nucleus. Functionally, stimulates the GTPase/ATPase activities of Obg-like ATPases. Mediates the transient calcium-dependent interaction of PYR/PYL/RCAR abscisic acid (ABA) receptors with the plasma membrane and thus regulates ABA sensitivity. In Arabidopsis thaliana (Mouse-ear cress), this protein is Protein C2-DOMAIN ABA-RELATED 5.